The primary structure comprises 159 residues: SsrA-binding protein (159 aa).

The protein belongs to the SmpB family.

The protein localises to the cytoplasm. Its function is as follows. Required for rescue of stalled ribosomes mediated by trans-translation. Binds to transfer-messenger RNA (tmRNA), required for stable association of tmRNA with ribosomes. tmRNA and SmpB together mimic tRNA shape, replacing the anticodon stem-loop with SmpB. tmRNA is encoded by the ssrA gene; the 2 termini fold to resemble tRNA(Ala) and it encodes a 'tag peptide', a short internal open reading frame. During trans-translation Ala-aminoacylated tmRNA acts like a tRNA, entering the A-site of stalled ribosomes, displacing the stalled mRNA. The ribosome then switches to translate the ORF on the tmRNA; the nascent peptide is terminated with the 'tag peptide' encoded by the tmRNA and targeted for degradation. The ribosome is freed to recommence translation, which seems to be the essential function of trans-translation. In Dichelobacter nodosus (strain VCS1703A), this protein is SsrA-binding protein.